The primary structure comprises 45 residues: Keratin-associated protein 22-2 (45 aa).

It belongs to the KRTAP type 20 family. In terms of assembly, interacts with hair keratins.

In the hair cortex, hair keratin intermediate filaments are embedded in an interfilamentous matrix, consisting of hair keratin-associated proteins (KRTAP), which are essential for the formation of a rigid and resistant hair shaft through their extensive disulfide bond cross-linking with abundant cysteine residues of hair keratins. The matrix proteins include the high-sulfur and high-glycine-tyrosine keratins. This is Keratin-associated protein 22-2 (KRTAP22-2) from Homo sapiens (Human).